Here is a 244-residue protein sequence, read N- to C-terminus: Phosphoadenosine 5'-phosphosulfate reductase (244 aa).

Cys239 functions as the Nucleophile; cysteine thiosulfonate intermediate in the catalytic mechanism.

Belongs to the PAPS reductase family. CysH subfamily.

It localises to the cytoplasm. The enzyme catalyses [thioredoxin]-disulfide + sulfite + adenosine 3',5'-bisphosphate + 2 H(+) = [thioredoxin]-dithiol + 3'-phosphoadenylyl sulfate. It functions in the pathway sulfur metabolism; hydrogen sulfide biosynthesis; sulfite from sulfate: step 3/3. In terms of biological role, catalyzes the formation of sulfite from phosphoadenosine 5'-phosphosulfate (PAPS) using thioredoxin as an electron donor. This is Phosphoadenosine 5'-phosphosulfate reductase from Shigella boydii serotype 4 (strain Sb227).